The following is a 149-amino-acid chain: MERTFIAIKPDGVQRGLVGQIISRFETKGFTLVGLKIMTVTKELAEKHYDVHKERPFFSSLIEFIKSGPLVAMVWEGEGVVASARKIIGATNPLTAEPGTIRGDYGISLGRNLIHGSDAIETAQTEINLWFKEEELVSWKPTLTSWIVE.

Residues lysine 9, phenylalanine 57, arginine 85, threonine 91, arginine 102, and asparagine 112 each coordinate ATP. The active-site Pros-phosphohistidine intermediate is the histidine 115.

The protein belongs to the NDK family. In terms of assembly, homotetramer. Mg(2+) serves as cofactor.

It localises to the cytoplasm. It catalyses the reaction a 2'-deoxyribonucleoside 5'-diphosphate + ATP = a 2'-deoxyribonucleoside 5'-triphosphate + ADP. The enzyme catalyses a ribonucleoside 5'-diphosphate + ATP = a ribonucleoside 5'-triphosphate + ADP. Functionally, major role in the synthesis of nucleoside triphosphates other than ATP. The ATP gamma phosphate is transferred to the NDP beta phosphate via a ping-pong mechanism, using a phosphorylated active-site intermediate. The chain is Nucleoside diphosphate kinase from Trichodesmium erythraeum (strain IMS101).